We begin with the raw amino-acid sequence, 485 residues long: Glutamyl-tRNA(Gln) amidotransferase subunit A (485 aa).

Residues Lys78 and Ser153 each act as charge relay system in the active site. Catalysis depends on Ser177, which acts as the Acyl-ester intermediate.

The protein belongs to the amidase family. GatA subfamily. In terms of assembly, heterotrimer of A, B and C subunits.

The enzyme catalyses L-glutamyl-tRNA(Gln) + L-glutamine + ATP + H2O = L-glutaminyl-tRNA(Gln) + L-glutamate + ADP + phosphate + H(+). Its function is as follows. Allows the formation of correctly charged Gln-tRNA(Gln) through the transamidation of misacylated Glu-tRNA(Gln) in organisms which lack glutaminyl-tRNA synthetase. The reaction takes place in the presence of glutamine and ATP through an activated gamma-phospho-Glu-tRNA(Gln). The chain is Glutamyl-tRNA(Gln) amidotransferase subunit A from Desulfatibacillum aliphaticivorans.